We begin with the raw amino-acid sequence, 394 residues long: QWRF motif-containing protein 7 (394 aa).

Residues 1 to 171 form a disordered region; it reads MATTGRRLRP…ESPVSKAKIR (171 aa). The span at 14 to 67 shows a compositional bias: low complexity; the sequence is NNNRSRTISSSISLPVSLNASLSSSTSSSSSSSPSNSSKRVMITRSQSTTRSSR. Positions 85–96 are enriched in polar residues; sequence NSASRSQEINNG. Residues 97–110 are compositionally biased toward basic and acidic residues; that stretch reads RSRESFARYLEQRT. 2 stretches are compositionally biased toward polar residues: residues 111 to 120 and 142 to 157; these read RGSPRSNASS and TMKT…TSMC. The QWRF motif motif lies at 211-214; that stretch reads QWRF.

Belongs to the QWRF family.

The protein is QWRF motif-containing protein 7 (QWRF7) of Arabidopsis thaliana (Mouse-ear cress).